A 448-amino-acid polypeptide reads, in one-letter code: Protein Z-dependent protease inhibitor (448 aa).

The first 21 residues, 1-21, serve as a signal peptide directing secretion; sequence MRVASSLFLPVLLTEVWLVTS. The interval 33-70 is disordered; it reads VHLESQDYENQTWEEYTRTDPREEEEEEEEKEEGKDEE. Residues 54-63 show a composition bias toward acidic residues; sequence REEEEEEEEK. N-linked (GlcNAc...) asparagine glycosylation is present at Asn-81. Residues 140 to 157 are heparin-binding; sequence AGPLILPALFKKVKETFS. Residues Asn-184, Asn-278, and Asn-299 are each glycosylated (N-linked (GlcNAc...) asparagine).

It belongs to the serpin family. Phosphorylated by FAM20C in the extracellular medium. Detectable in liver, but not in heart, brain, spleen, lung, kidney, skeletal muscle or testes.

Its subcellular location is the secreted. In terms of biological role, inhibits activity of the coagulation protease factor Xa in the presence of PROZ, calcium and phospholipids. Also inhibits factor XIa in the absence of cofactors. This Mus musculus (Mouse) protein is Protein Z-dependent protease inhibitor (Serpina10).